Reading from the N-terminus, the 131-residue chain is Small ribosomal subunit protein uS8 (131 aa).

It belongs to the universal ribosomal protein uS8 family. In terms of assembly, part of the 30S ribosomal subunit. Contacts proteins S5 and S12.

One of the primary rRNA binding proteins, it binds directly to 16S rRNA central domain where it helps coordinate assembly of the platform of the 30S subunit. The protein is Small ribosomal subunit protein uS8 of Campylobacter jejuni (strain RM1221).